Consider the following 158-residue polypeptide: 3-dehydroquinate dehydratase (158 aa).

Y24 (proton acceptor) is an active-site residue. Residues N75, H81, and D88 each contribute to the substrate site. Catalysis depends on H101, which acts as the Proton donor. Substrate contacts are provided by residues L102–S103 and R112.

This sequence belongs to the type-II 3-dehydroquinase family. In terms of assembly, homododecamer.

It catalyses the reaction 3-dehydroquinate = 3-dehydroshikimate + H2O. It participates in metabolic intermediate biosynthesis; chorismate biosynthesis; chorismate from D-erythrose 4-phosphate and phosphoenolpyruvate: step 3/7. Its function is as follows. Catalyzes a trans-dehydration via an enolate intermediate. This Bartonella bacilliformis (strain ATCC 35685 / KC583 / Herrer 020/F12,63) protein is 3-dehydroquinate dehydratase.